A 681-amino-acid polypeptide reads, in one-letter code: Chaperone protein htpG (681 aa).

Positions 1-326 (MQKGNIGVTT…SPDIPLNVSR (326 aa)) are a; substrate-binding. Positions 327–545 (SYLQSDSNVK…YMRRMKEMAN (219 aa)) are b. The interval 546–681 (IQAGMSFYGE…NFVKRSIELI (136 aa)) is c.

Belongs to the heat shock protein 90 family. Homodimer.

The protein localises to the cytoplasm. Its function is as follows. Molecular chaperone. Has ATPase activity. This chain is Chaperone protein htpG, found in Bacteroides fragilis (strain YCH46).